The sequence spans 229 residues: Prolactin (229 aa).

Residues 1–30 form the signal peptide; sequence MDKKRSSLKGSLLLLLLLVSDLLLCKSVAS. A disulfide bridge connects residues Cys34 and Cys41. Ser56 carries the phosphoserine modification. Residue Asn61 is glycosylated (N-linked (GlcNAc...) asparagine; partial). 2 positions are modified to phosphoserine: Ser64 and Ser120. 2 disulfides stabilise this stretch: Cys88–Cys204 and Cys221–Cys229.

This sequence belongs to the somatotropin/prolactin family. As to quaternary structure, interacts with PRLR.

It is found in the secreted. In terms of biological role, prolactin acts primarily on the mammary gland by promoting lactation. The polypeptide is Prolactin (PRL) (Equus caballus (Horse)).